The sequence spans 154 residues: Large ribosomal subunit protein uL15 (154 aa).

Positions 1 to 57 (MRFQDLHPQAGSRRRKRRIGRGIAAGQGASGGFGMRGQKSRSGRPTRPGFEGGQNPL) are disordered. A compositionally biased stretch (gly residues) spans 23–35 (IAAGQGASGGFGM).

Belongs to the universal ribosomal protein uL15 family. In terms of assembly, part of the 50S ribosomal subunit.

Its function is as follows. Binds to the 23S rRNA. This Thermosynechococcus vestitus (strain NIES-2133 / IAM M-273 / BP-1) protein is Large ribosomal subunit protein uL15.